The following is a 108-amino-acid chain: DNA-directed RNA polymerase III subunit RPC10 (108 aa).

Zn(2+) contacts are provided by C5, C8, C25, C28, C69, and C72. The C4-type zinc finger occupies 5–28 (CPGCGNGLIVEEGQRCHRFACNTC). The TFIIS-type zinc finger occupies 65-107 (TAESCPKCEHPRAYFMQLQTRSADEPMTTFYKCCNAQCGHRWR). Residues 88–89 (DE) carry the Hairpin motif. 2 residues coordinate Zn(2+): C98 and C102.

Belongs to the archaeal RpoM/eukaryotic RPA12/RPB9/RPC11 RNA polymerase family. In terms of assembly, component of the RNA polymerase III complex consisting of 17 subunits: a ten-subunit horseshoe-shaped catalytic core composed of POLR3A/RPC1, POLR3B/RPC2, POLR1C/RPAC1, POLR1D/RPAC2, POLR3K/RPC10, POLR2E/RPABC1, POLR2F/RPABC2, POLR2H/RPABC3, POLR2K/RPABC4 and POLR2L/RPABC5; a mobile stalk composed of two subunits POLR3H/RPC8 and CRCP/RPC9, protruding from the core and functioning primarily in transcription initiation; and additional subunits homologous to general transcription factors of the RNA polymerase II machinery, POLR3C/RPC3-POLR3F/RPC6-POLR3G/RPC7 heterotrimer required for transcription initiation and POLR3D/RPC4-POLR3E/RPC5 heterodimer involved in both transcription initiation and termination.

It localises to the nucleus. Functionally, core component of RNA polymerase III (Pol III) which synthesizes small non-coding RNAs using the four ribonucleoside triphosphates as substrates. Can mediate Pol I proofreading of the nascent RNA transcript. Anchors into the Pol III active site to constantly monitor transcription fidelity, cleaves mis-incorporated 5'-ribonucleotides and restarts the transcription process. Once Pol III reaches the poly(dT) termination signal, can induce Pol III clamp opening and transcription termination. Pol III plays an important role in sensing and limiting infection by intracellular bacteria and DNA viruses. Acts as a nuclear and cytosolic DNA sensor involved in innate immune response. Can sense non-self dsDNA that serves as template for transcription into dsRNA. The non-self RNA polymerase III transcripts, such as Epstein-Barr virus-encoded RNAs (EBERs) induce type I interferon and NF-kappa-B through the RIG-I pathway. The polypeptide is DNA-directed RNA polymerase III subunit RPC10 (Homo sapiens (Human)).